The primary structure comprises 116 residues: Protein Rev (116 aa).

2 positions are modified to phosphoserine; by host CK2: Ser-5 and Ser-8. The segment at 18–26 is homomultimerization; that stretch reads LIKFLYQSN. Residues 23–48 are disordered; it reads YQSNPPPNPEGTRQARRNRRRRWRER. A Nuclear localization signal and RNA-binding (RRE) motif is present at residues 34 to 50; sequence TRQARRNRRRRWRERQR. A compositionally biased stretch (basic residues) spans 36–48; that stretch reads QARRNRRRRWRER. Residues 73-84 carry the Nuclear export signal and binding to XPO1 motif; sequence LQLPPLERLNLD. A disordered region spans residues 90–116; it reads GTSGTQGVGSPEILVESPAVLEPGTKE. Residues Ser-92 and Ser-99 each carry the phosphoserine; by host modification.

The protein belongs to the HIV-1 REV protein family. In terms of assembly, homomultimer; when bound to the RRE. Multimeric assembly is essential for activity and may involve XPO1. Binds to human KPNB1, XPO1, TNPO1, RANBP5 and IPO7. Interacts with the viral Integrase. Interacts with human KHDRBS1. Interacts with human NAP1; this interaction decreases Rev multimerization and stimulates its activity. Interacts with human DEAD-box helicases DDX3 and DDX24; these interactions may serve for viral RNA export to the cytoplasm and packaging, respectively. Interacts with human PSIP1; this interaction may inhibit HIV-1 DNA integration by promoting dissociation of the Integrase-LEDGF/p75 complex. In terms of processing, asymmetrically arginine dimethylated at one site by host PRMT6. Methylation impairs the RNA-binding activity and export of viral RNA from the nucleus to the cytoplasm. Post-translationally, phosphorylated by protein kinase CK2. Presence of, and maybe binding to the N-terminus of the regulatory beta subunit of CK2 is necessary for CK2-mediated Rev's phosphorylation.

The protein resides in the host nucleus. The protein localises to the host nucleolus. It localises to the host cytoplasm. Functionally, escorts unspliced or incompletely spliced viral pre-mRNAs (late transcripts) out of the nucleus of infected cells. These pre-mRNAs carry a recognition sequence called Rev responsive element (RRE) located in the env gene, that is not present in fully spliced viral mRNAs (early transcripts). This function is essential since most viral proteins are translated from unspliced or partially spliced pre-mRNAs which cannot exit the nucleus by the pathway used by fully processed cellular mRNAs. Rev itself is translated from a fully spliced mRNA that readily exits the nucleus. Rev's nuclear localization signal (NLS) binds directly to KPNB1/Importin beta-1 without previous binding to KPNA1/Importin alpha-1. KPNB1 binds to the GDP bound form of RAN (Ran-GDP) and targets Rev to the nucleus. In the nucleus, the conversion from Ran-GDP to Ran-GTP dissociates Rev from KPNB1 and allows Rev's binding to the RRE in viral pre-mRNAs. Rev multimerization on the RRE via cooperative assembly exposes its nuclear export signal (NES) to the surface. Rev can then form a complex with XPO1/CRM1 and Ran-GTP, leading to nuclear export of the complex. Conversion from Ran-GTP to Ran-GDP mediates dissociation of the Rev/RRE/XPO1/RAN complex, so that Rev can return to the nucleus for a subsequent round of export. Beside KPNB1, also seems to interact with TNPO1/Transportin-1, RANBP5/IPO5 and IPO7/RANBP7 for nuclear import. The nucleoporin-like HRB/RIP is an essential cofactor that probably indirectly interacts with Rev to release HIV RNAs from the perinuclear region to the cytoplasm. This is Protein Rev from Human immunodeficiency virus type 1 group M subtype B (isolate OYI) (HIV-1).